The sequence spans 426 residues: Histidine--tRNA ligase (426 aa).

Belongs to the class-II aminoacyl-tRNA synthetase family. Homodimer.

The protein localises to the cytoplasm. It carries out the reaction tRNA(His) + L-histidine + ATP = L-histidyl-tRNA(His) + AMP + diphosphate + H(+). This is Histidine--tRNA ligase from Streptococcus pyogenes serotype M18 (strain MGAS8232).